A 282-amino-acid chain; its full sequence is Pantothenate synthetase (282 aa).

Position 30-37 (30-37 (MGYLHEGH)) interacts with ATP. Catalysis depends on His-37, which acts as the Proton donor. Gln-61 lines the (R)-pantoate pocket. Gln-61 is a beta-alanine binding site. 147–150 (GQKD) provides a ligand contact to ATP. Gln-153 contacts (R)-pantoate. Residues Val-176 and 184–187 (LSSR) each bind ATP.

Belongs to the pantothenate synthetase family. Homodimer.

Its subcellular location is the cytoplasm. It carries out the reaction (R)-pantoate + beta-alanine + ATP = (R)-pantothenate + AMP + diphosphate + H(+). Its pathway is cofactor biosynthesis; (R)-pantothenate biosynthesis; (R)-pantothenate from (R)-pantoate and beta-alanine: step 1/1. In terms of biological role, catalyzes the condensation of pantoate with beta-alanine in an ATP-dependent reaction via a pantoyl-adenylate intermediate. In Desulfitobacterium hafniense (strain DSM 10664 / DCB-2), this protein is Pantothenate synthetase.